The chain runs to 67 residues: DNA gyrase inhibitor YacG (67 aa).

Cysteine 10, cysteine 13, cysteine 29, and cysteine 33 together coordinate Zn(2+). Residues 44–57 show a composition bias toward basic and acidic residues; sequence EEKRIPSSGDRSDT. Positions 44–67 are disordered; it reads EEKRIPSSGDRSDTDGWSEEENQP.

This sequence belongs to the DNA gyrase inhibitor YacG family. In terms of assembly, interacts with GyrB. It depends on Zn(2+) as a cofactor.

Its function is as follows. Inhibits all the catalytic activities of DNA gyrase by preventing its interaction with DNA. Acts by binding directly to the C-terminal domain of GyrB, which probably disrupts DNA binding by the gyrase. The sequence is that of DNA gyrase inhibitor YacG from Cronobacter sakazakii (strain ATCC BAA-894) (Enterobacter sakazakii).